Reading from the N-terminus, the 250-residue chain is 3-deoxy-manno-octulosonate cytidylyltransferase (250 aa).

This sequence belongs to the KdsB family.

It is found in the cytoplasm. The catalysed reaction is 3-deoxy-alpha-D-manno-oct-2-ulosonate + CTP = CMP-3-deoxy-beta-D-manno-octulosonate + diphosphate. It functions in the pathway nucleotide-sugar biosynthesis; CMP-3-deoxy-D-manno-octulosonate biosynthesis; CMP-3-deoxy-D-manno-octulosonate from 3-deoxy-D-manno-octulosonate and CTP: step 1/1. The protein operates within bacterial outer membrane biogenesis; lipopolysaccharide biosynthesis. In terms of biological role, activates KDO (a required 8-carbon sugar) for incorporation into bacterial lipopolysaccharide in Gram-negative bacteria. In Legionella pneumophila (strain Corby), this protein is 3-deoxy-manno-octulosonate cytidylyltransferase.